The following is a 123-amino-acid chain: Small ribosomal subunit protein uS12 (123 aa).

Asp89 is subject to 3-methylthioaspartic acid. The interval 102 to 123 (LDTSGVQDRRQRRSKYGAKRPK) is disordered. Residues 111–123 (RQRRSKYGAKRPK) are compositionally biased toward basic residues.

The protein belongs to the universal ribosomal protein uS12 family. As to quaternary structure, part of the 30S ribosomal subunit. Contacts proteins S8 and S17. May interact with IF1 in the 30S initiation complex.

With S4 and S5 plays an important role in translational accuracy. Functionally, interacts with and stabilizes bases of the 16S rRNA that are involved in tRNA selection in the A site and with the mRNA backbone. Located at the interface of the 30S and 50S subunits, it traverses the body of the 30S subunit contacting proteins on the other side and probably holding the rRNA structure together. The combined cluster of proteins S8, S12 and S17 appears to hold together the shoulder and platform of the 30S subunit. This is Small ribosomal subunit protein uS12 from Lawsonia intracellularis (strain PHE/MN1-00).